The sequence spans 764 residues: Oxysterol-binding protein-related protein 10 (764 aa).

The tract at residues 1–74 is disordered; it reads MERAVQGTDG…PSGGGGRRRE (74 aa). 2 stretches are compositionally biased toward low complexity: residues 15–47 and 55–65; these read NSSS…SAAA and RSSPGSVAASP. Serine 29 and serine 30 each carry phosphoserine. Arginine 38 carries the omega-N-methylarginine modification. Serine 57, serine 60, and serine 64 each carry phosphoserine. A PH domain is found at 74–171; the sequence is EPALEGVLSK…WVTQLRACAK (98 aa). Threonine 196 is modified (phosphothreonine). 3 positions are modified to phosphoserine: serine 201, serine 209, and serine 223. 2 disordered regions span residues 304–335 and 354–391; these read GQPS…NGTL and AEDE…TELG. A compositionally biased stretch (polar residues) spans 359 to 370; that stretch reads TSQPEPEPNSGS. Residues 374-389 show a composition bias toward acidic residues; it reads LSEDEKSDNEDKEETE. Residues 413–418 and 477–480 each bind a 1,2-diacyl-sn-glycero-3-phospho-(1D-myo-inositol 4-phosphate); these read LTKVVL and KPYN. A 1,2-diacyl-sn-glycero-3-phospho-L-serine contacts are provided by residues 413 to 418 and asparagine 480; that span reads LTKVVL. A disordered region spans residues 501–520; that stretch reads KRTASRSPASCHEHPMADDP. Residues 511 to 520 are compositionally biased toward basic and acidic residues; sequence CHEHPMADDP. 535-536 serves as a coordination point for a 1,2-diacyl-sn-glycero-3-phospho-(1D-myo-inositol 4-phosphate); it reads HH. Serine 561 lines the a 1,2-diacyl-sn-glycero-3-phospho-L-serine pocket. Positions 713 to 740 form a coiled coil; sequence DIDAATEQKRHLEEKQRVEERKRENLRT. Lysine 721, glutamate 725, and arginine 729 together coordinate a 1,2-diacyl-sn-glycero-3-phospho-(1D-myo-inositol 4-phosphate).

It belongs to the OSBP family. Interacts with OSBPL9. Interacts with DIAPH1.

The protein resides in the cytoplasm. The protein localises to the cytoskeleton. Its function is as follows. Probable lipid transporter involved in lipid countertransport between the endoplasmic reticulum and the plasma membrane. Its ability to bind phosphatidylserine, suggests that it specifically exchanges phosphatidylserine with phosphatidylinositol 4-phosphate (PI4P), delivering phosphatidylserine to the plasma membrane in exchange for PI4P. Plays a role in negative regulation of lipid biosynthesis. Negatively regulates APOB secretion from hepatocytes. Binds cholesterol and acidic phospholipids. Also binds 25-hydroxycholesterol. Binds phosphatidylserine. The polypeptide is Oxysterol-binding protein-related protein 10 (OSBPL10) (Homo sapiens (Human)).